The primary structure comprises 195 residues: Orotate phosphoribosyltransferase (195 aa).

117 to 125 is a binding site for 5-phospho-alpha-D-ribose 1-diphosphate; that stretch reads EDITTTGGS. Residues T121 and R149 each contribute to the orotate site.

The protein belongs to the purine/pyrimidine phosphoribosyltransferase family. PyrE subfamily. Homodimer. Mg(2+) serves as cofactor.

The enzyme catalyses orotidine 5'-phosphate + diphosphate = orotate + 5-phospho-alpha-D-ribose 1-diphosphate. Its pathway is pyrimidine metabolism; UMP biosynthesis via de novo pathway; UMP from orotate: step 1/2. In terms of biological role, catalyzes the transfer of a ribosyl phosphate group from 5-phosphoribose 1-diphosphate to orotate, leading to the formation of orotidine monophosphate (OMP). This chain is Orotate phosphoribosyltransferase, found in Acidithiobacillus ferrooxidans (strain ATCC 53993 / BNL-5-31) (Leptospirillum ferrooxidans (ATCC 53993)).